A 122-amino-acid chain; its full sequence is Large ribosomal subunit protein uL14 (122 aa).

It belongs to the universal ribosomal protein uL14 family. As to quaternary structure, part of the 50S ribosomal subunit. Forms a cluster with proteins L3 and L19. In the 70S ribosome, L14 and L19 interact and together make contacts with the 16S rRNA in bridges B5 and B8.

Binds to 23S rRNA. Forms part of two intersubunit bridges in the 70S ribosome. The sequence is that of Large ribosomal subunit protein uL14 from Mycoplasma mobile (strain ATCC 43663 / 163K / NCTC 11711) (Mesomycoplasma mobile).